We begin with the raw amino-acid sequence, 1053 residues long: DNA-directed RNA polymerase subunit beta' (1053 aa).

Zn(2+) contacts are provided by Cys60, Cys62, Cys75, and Cys78. The Mg(2+) site is built by Asp449, Asp451, and Asp453.

It belongs to the RNA polymerase beta' chain family. In terms of assembly, the RNAP catalytic core consists of 2 alpha, 1 beta, 1 beta' and 1 omega subunit. When a sigma factor is associated with the core the holoenzyme is formed, which can initiate transcription. Mg(2+) serves as cofactor. Requires Zn(2+) as cofactor.

The catalysed reaction is RNA(n) + a ribonucleoside 5'-triphosphate = RNA(n+1) + diphosphate. Its function is as follows. DNA-dependent RNA polymerase catalyzes the transcription of DNA into RNA using the four ribonucleoside triphosphates as substrates. The sequence is that of DNA-directed RNA polymerase subunit beta' from Brochothrix thermosphacta (Microbacterium thermosphactum).